The primary structure comprises 75 residues: Small ribosomal subunit protein bS18c (75 aa).

It belongs to the bacterial ribosomal protein bS18 family. In terms of assembly, part of the 30S ribosomal subunit.

It is found in the plastid. Its subcellular location is the chloroplast. This Marchantia polymorpha (Common liverwort) protein is Small ribosomal subunit protein bS18c (rps18).